A 105-amino-acid polypeptide reads, in one-letter code: Putative zinc finger protein 861 (105 aa).

The C2H2-type zinc finger occupies 75 to 97; sequence YTCKPCGNAFRFHHSFHIHERPH.

In Homo sapiens (Human), this protein is Putative zinc finger protein 861 (ZNF861P).